The primary structure comprises 453 residues: Tubulin delta chain (453 aa).

143-149 is a GTP binding site; sequence AGGTGSG.

The protein belongs to the tubulin family. As to quaternary structure, found in a complex with TEDC1, TEDC2, TUBE1 and TUBD1.

It localises to the nucleus. The protein resides in the cytoplasm. It is found in the cytoskeleton. Its subcellular location is the microtubule organizing center. The protein localises to the centrosome. It localises to the centriole. The protein resides in the cell projection. It is found in the cilium. Its function is as follows. Acts as a positive regulator of hedgehog signaling and regulates ciliary function. In Homo sapiens (Human), this protein is Tubulin delta chain (TUBD1).